The following is a 65-amino-acid chain: Large ribosomal subunit protein bL35 (65 aa).

Belongs to the bacterial ribosomal protein bL35 family.

This chain is Large ribosomal subunit protein bL35, found in Clostridium botulinum (strain Loch Maree / Type A3).